The sequence spans 238 residues: Protein Iojap, chloroplastic (238 aa).

A chloroplast-targeting transit peptide spans 1-66 (MASSTGLTVA…KILTSLSNSR (66 aa)).

The protein belongs to the Iojap/RsfS family. In terms of assembly, interacts with chloroplast ribosomal protein uL14c (rpl14).

The protein resides in the plastid. It localises to the chloroplast. Its function is as follows. May be a ribosome silencing factor (Potential). Involved in plastid biogenesis. The chain is Protein Iojap, chloroplastic (IJ) from Arabidopsis thaliana (Mouse-ear cress).